We begin with the raw amino-acid sequence, 134 residues long: Probable thionin-2.4 (134 aa).

An N-terminal signal peptide occupies residues 1 to 24 (MEGKTLIVSVLIMSLFMAQNQVDA). Intrachain disulfides connect cysteine 27/cysteine 64, cysteine 28/cysteine 56, and cysteine 40/cysteine 50. Residues 71–134 (DILENTGDAV…KGSMNAVENA (64 aa)) constitute a propeptide, acidic domain.

It belongs to the plant thionin (TC 1.C.44) family.

Its subcellular location is the secreted. Its function is as follows. Thionins are small plant proteins which are toxic to animal cells. They seem to exert their toxic effect at the level of the cell membrane. Their precise function is not known. The chain is Probable thionin-2.4 from Arabidopsis thaliana (Mouse-ear cress).